A 315-amino-acid polypeptide reads, in one-letter code: Acetyl-coenzyme A carboxylase carboxyl transferase subunit alpha (315 aa).

In terms of domain architecture, CoA carboxyltransferase C-terminal spans 40–293 (LQDKSKTLTE…RAELSSQLAM (254 aa)).

This sequence belongs to the AccA family. As to quaternary structure, acetyl-CoA carboxylase is a heterohexamer composed of biotin carboxyl carrier protein (AccB), biotin carboxylase (AccC) and two subunits each of ACCase subunit alpha (AccA) and ACCase subunit beta (AccD).

The protein localises to the cytoplasm. It catalyses the reaction N(6)-carboxybiotinyl-L-lysyl-[protein] + acetyl-CoA = N(6)-biotinyl-L-lysyl-[protein] + malonyl-CoA. It functions in the pathway lipid metabolism; malonyl-CoA biosynthesis; malonyl-CoA from acetyl-CoA: step 1/1. Its function is as follows. Component of the acetyl coenzyme A carboxylase (ACC) complex. First, biotin carboxylase catalyzes the carboxylation of biotin on its carrier protein (BCCP) and then the CO(2) group is transferred by the carboxyltransferase to acetyl-CoA to form malonyl-CoA. This Pseudomonas fluorescens (strain Pf0-1) protein is Acetyl-coenzyme A carboxylase carboxyl transferase subunit alpha.